We begin with the raw amino-acid sequence, 343 residues long: F17e-G fimbrial adhesin (343 aa).

Positions 1–22 (MTNFYKVFLAVFILVCCNISHA) are cleaved as a signal peptide. Residues 23–199 (AVSFIGSTEN…LNPFTLNDTV (177 aa)) form a receptor-binding lectin domain region. Residues 65–66 (AN), 110–111 (DT), and 138–141 (STQG) contribute to the a carbohydrate site. Cysteine 75 and cysteine 132 are oxidised to a cystine. The segment at 200-343 (TSCRLLTPSA…GISTFTFSYQ (144 aa)) is fimbrillin-binding domain. Residues 287–307 (LKFGPDSPVKGNENQWQLSTG) form a disordered region. Positions 298–307 (NENQWQLSTG) are enriched in polar residues.

This sequence belongs to the fimbrial protein family.

It localises to the fimbrium. Its function is as follows. Essential fimbrial adhesion factor that mediates binding to N-acetylglucosamine-containing receptors in the host intestinal microvilli, leading to colonization of the intestinal tissue, and diarrhea or septicemia. Also confers adhesiveness to laminin and basement membranes. The chain is F17e-G fimbrial adhesin (f17eG) from Escherichia coli.